Here is a 445-residue protein sequence, read N- to C-terminus: Methylenetetrahydrofolate--tRNA-(uracil-5-)-methyltransferase TrmFO (445 aa).

Glycine 10–glycine 15 is a binding site for FAD.

The protein belongs to the MnmG family. TrmFO subfamily. It depends on FAD as a cofactor.

It is found in the cytoplasm. The catalysed reaction is uridine(54) in tRNA + (6R)-5,10-methylene-5,6,7,8-tetrahydrofolate + NADH + H(+) = 5-methyluridine(54) in tRNA + (6S)-5,6,7,8-tetrahydrofolate + NAD(+). It catalyses the reaction uridine(54) in tRNA + (6R)-5,10-methylene-5,6,7,8-tetrahydrofolate + NADPH + H(+) = 5-methyluridine(54) in tRNA + (6S)-5,6,7,8-tetrahydrofolate + NADP(+). Its function is as follows. Catalyzes the folate-dependent formation of 5-methyl-uridine at position 54 (M-5-U54) in all tRNAs. This Lawsonia intracellularis (strain PHE/MN1-00) protein is Methylenetetrahydrofolate--tRNA-(uracil-5-)-methyltransferase TrmFO.